A 236-amino-acid polypeptide reads, in one-letter code: Small ribosomal subunit protein uS3 (236 aa).

Residues Ile39–Arg107 form the KH type-2 domain. The tract at residues Met213–Ala236 is disordered.

It belongs to the universal ribosomal protein uS3 family. As to quaternary structure, part of the 30S ribosomal subunit. Forms a tight complex with proteins S10 and S14.

Its function is as follows. Binds the lower part of the 30S subunit head. Binds mRNA in the 70S ribosome, positioning it for translation. The polypeptide is Small ribosomal subunit protein uS3 (Bradyrhizobium sp. (strain ORS 278)).